The primary structure comprises 686 residues: Probable metal-nicotianamine transporter YSL10 (686 aa).

A run of 14 helical transmembrane segments spans residues 36–56 (VTLR…VIVM), 60–80 (LTTG…FFLL), 109–129 (CVVA…IFAM), 151–171 (LGWM…SVVP), 212–232 (MLGK…FYTG), 271–291 (LVNI…WPLI), 316–336 (VFIS…KVMT), 383–403 (IPNW…IATV), 415–435 (VAVS…GCGL), 461–481 (GGII…STAS), 501–521 (FVSQ…VFWL), 556–576 (GSLP…AIAV), 597–617 (MAIP…GSLI), and 639–659 (GLIC…LAGV).

Belongs to the YSL (TC 2.A.67.2) family.

It is found in the membrane. In terms of biological role, may be involved in the transport of nicotianamine-chelated metals. This Oryza sativa subsp. japonica (Rice) protein is Probable metal-nicotianamine transporter YSL10 (YSL10).